Consider the following 177-residue polypeptide: Archaemetzincin (177 aa).

H129 serves as a coordination point for Zn(2+). The active-site Proton acceptor is E130. Residues H133, H139, C140, C145, C164, and C167 each contribute to the Zn(2+) site.

This sequence belongs to the peptidase M54 family. As to quaternary structure, monomer. Zn(2+) is required as a cofactor.

Functionally, probable zinc metalloprotease whose natural substrate is unknown. The sequence is that of Archaemetzincin from Sulfolobus acidocaldarius (strain ATCC 33909 / DSM 639 / JCM 8929 / NBRC 15157 / NCIMB 11770).